The sequence spans 136 residues: Aspartate 1-decarboxylase (136 aa).

Residue Ser25 is the Schiff-base intermediate with substrate; via pyruvic acid of the active site. Ser25 carries the post-translational modification Pyruvic acid (Ser). Residue Thr57 coordinates substrate. Residue Tyr58 is the Proton donor of the active site. 73–75 (GAA) serves as a coordination point for substrate.

It belongs to the PanD family. In terms of assembly, heterooctamer of four alpha and four beta subunits. Pyruvate is required as a cofactor. In terms of processing, is synthesized initially as an inactive proenzyme, which is activated by self-cleavage at a specific serine bond to produce a beta-subunit with a hydroxyl group at its C-terminus and an alpha-subunit with a pyruvoyl group at its N-terminus.

Its subcellular location is the cytoplasm. The catalysed reaction is L-aspartate + H(+) = beta-alanine + CO2. The protein operates within cofactor biosynthesis; (R)-pantothenate biosynthesis; beta-alanine from L-aspartate: step 1/1. Catalyzes the pyruvoyl-dependent decarboxylation of aspartate to produce beta-alanine. This Corynebacterium efficiens (strain DSM 44549 / YS-314 / AJ 12310 / JCM 11189 / NBRC 100395) protein is Aspartate 1-decarboxylase.